The following is a 572-amino-acid chain: Proline--tRNA ligase (572 aa).

It belongs to the class-II aminoacyl-tRNA synthetase family. ProS type 1 subfamily. As to quaternary structure, homodimer.

The protein localises to the cytoplasm. It carries out the reaction tRNA(Pro) + L-proline + ATP = L-prolyl-tRNA(Pro) + AMP + diphosphate. Its function is as follows. Catalyzes the attachment of proline to tRNA(Pro) in a two-step reaction: proline is first activated by ATP to form Pro-AMP and then transferred to the acceptor end of tRNA(Pro). As ProRS can inadvertently accommodate and process non-cognate amino acids such as alanine and cysteine, to avoid such errors it has two additional distinct editing activities against alanine. One activity is designated as 'pretransfer' editing and involves the tRNA(Pro)-independent hydrolysis of activated Ala-AMP. The other activity is designated 'posttransfer' editing and involves deacylation of mischarged Ala-tRNA(Pro). The misacylated Cys-tRNA(Pro) is not edited by ProRS. The protein is Proline--tRNA ligase of Pectobacterium carotovorum subsp. carotovorum (strain PC1).